The chain runs to 362 residues: Chorismate synthase (362 aa).

NADP(+) contacts are provided by Arg-48 and Arg-54. FMN contacts are provided by residues 125 to 127, 238 to 239, Gly-278, 293 to 297, and Arg-319; these read RSS, NA, and KPTSS.

The protein belongs to the chorismate synthase family. In terms of assembly, homotetramer. Requires FMNH2 as cofactor.

The enzyme catalyses 5-O-(1-carboxyvinyl)-3-phosphoshikimate = chorismate + phosphate. It participates in metabolic intermediate biosynthesis; chorismate biosynthesis; chorismate from D-erythrose 4-phosphate and phosphoenolpyruvate: step 7/7. Its function is as follows. Catalyzes the anti-1,4-elimination of the C-3 phosphate and the C-6 proR hydrogen from 5-enolpyruvylshikimate-3-phosphate (EPSP) to yield chorismate, which is the branch point compound that serves as the starting substrate for the three terminal pathways of aromatic amino acid biosynthesis. This reaction introduces a second double bond into the aromatic ring system. In Tolumonas auensis (strain DSM 9187 / NBRC 110442 / TA 4), this protein is Chorismate synthase.